Here is a 251-residue protein sequence, read N- to C-terminus: MADPTAEPVAGQSSLIRPAYSRVLLKLGGEMFGGGQVGLDPDVVAQVARQIAEVVRSGAQVAVVIGGGNFFRGAQLQQRGMDRARSDYMGMLGTVMNSLALQDFLQKEGIDTRVQTAITMGQVAEPYIPLRAVRHLEKGRVVIFGAGMGLPYFSTDTTAAQRALEIGADVVLMAKAVDGVFTADPRVDPDAELLIAISHREVIDRGLKVADATAFSLCMDNGMPILVFNLLVDGNIARAVAGEKIGTLVTT.

Lys26–Gly29 serves as a coordination point for ATP. Gly67 is a binding site for UMP. ATP-binding residues include Gly68 and Arg72. Residues Asp87 and Met148–Thr155 contribute to the UMP site. ATP-binding residues include Phe181 and Asp184.

Belongs to the UMP kinase family. As to quaternary structure, homohexamer.

It localises to the cytoplasm. The catalysed reaction is UMP + ATP = UDP + ADP. The protein operates within pyrimidine metabolism; CTP biosynthesis via de novo pathway; UDP from UMP (UMPK route): step 1/1. Inhibited by UTP. Functionally, catalyzes the reversible phosphorylation of UMP to UDP. The polypeptide is Uridylate kinase (Mycolicibacterium vanbaalenii (strain DSM 7251 / JCM 13017 / BCRC 16820 / KCTC 9966 / NRRL B-24157 / PYR-1) (Mycobacterium vanbaalenii)).